The primary structure comprises 277 residues: Transcription antiterminator LicT (277 aa).

2 consecutive PRD domains span residues 65 to 170 (DIPI…EEMP) and 171 to 277 (NIIN…VKQA).

It belongs to the transcriptional antiterminator BglG family. Post-translationally, phosphorylated.

In terms of biological role, mediates positive regulation of the glucanase operon (licST) by functioning as an antiterminator factor of transcription. Prevents termination at terminator lic-t. This is Transcription antiterminator LicT (licT) from Bacillus subtilis (strain 168).